We begin with the raw amino-acid sequence, 485 residues long: Ribulose bisphosphate carboxylase large chain (485 aa).

Residues 1-2 (MS) constitute a propeptide that is removed on maturation. Pro3 bears the N-acetylproline mark. Residue Lys14 is modified to N6,N6,N6-trimethyllysine. Positions 123 and 173 each coordinate substrate. Lys175 functions as the Proton acceptor in the catalytic mechanism. A substrate-binding site is contributed by Lys177. Mg(2+) contacts are provided by Lys201, Asp203, and Glu204. Lys201 carries the N6-carboxylysine modification. His294 acts as the Proton acceptor in catalysis. The substrate site is built by Arg295, His327, and Ser379.

Belongs to the RuBisCO large chain family. Type I subfamily. In terms of assembly, heterohexadecamer of 8 large chains and 8 small chains; disulfide-linked. The disulfide link is formed within the large subunit homodimers. It depends on Mg(2+) as a cofactor. Post-translationally, the disulfide bond which can form in the large chain dimeric partners within the hexadecamer appears to be associated with oxidative stress and protein turnover.

The protein localises to the plastid. Its subcellular location is the chloroplast. It carries out the reaction 2 (2R)-3-phosphoglycerate + 2 H(+) = D-ribulose 1,5-bisphosphate + CO2 + H2O. It catalyses the reaction D-ribulose 1,5-bisphosphate + O2 = 2-phosphoglycolate + (2R)-3-phosphoglycerate + 2 H(+). RuBisCO catalyzes two reactions: the carboxylation of D-ribulose 1,5-bisphosphate, the primary event in carbon dioxide fixation, as well as the oxidative fragmentation of the pentose substrate in the photorespiration process. Both reactions occur simultaneously and in competition at the same active site. In Flaveria pringlei, this protein is Ribulose bisphosphate carboxylase large chain.